We begin with the raw amino-acid sequence, 341 residues long: HTH-type transcriptional repressor PurR (341 aa).

Residues 2–56 (ATIKDVAKHAGVSTTTVSHVINKTRFVAENTKAAVWAAIKELHYSPSAVARSLKV) enclose the HTH lacI-type domain. The segment at residues 4–23 (IKDVAKHAGVSTTTVSHVIN) is a DNA-binding region (H-T-H motif). The DNA-binding element occupies 48–56 (SAVARSLKV). The hypoxanthine site is built by tyrosine 73, arginine 190, threonine 192, phenylalanine 221, and aspartate 275.

In terms of assembly, homodimer.

The protein operates within purine metabolism; purine nucleotide biosynthesis [regulation]. Is the main repressor of the genes involved in the de novo synthesis of purine nucleotides, regulating purB, purC, purEK, purF, purHD, purL, purMN and guaBA expression. PurR is allosterically activated to bind its cognate DNA by binding the purine corepressors, hypoxanthine or guanine, thereby effecting transcription repression. In Yersinia enterocolitica serotype O:8 / biotype 1B (strain NCTC 13174 / 8081), this protein is HTH-type transcriptional repressor PurR.